A 277-amino-acid chain; its full sequence is Large ribosomal subunit protein uL2 (277 aa).

The tract at residues 222–277 is disordered; it reads GVAMNPVDHPHGGGEGRTSGGRHPVTPWGKPTKGKKTRSNKATDKFIMRSRHQRKK.

Belongs to the universal ribosomal protein uL2 family. In terms of assembly, part of the 50S ribosomal subunit. Forms a bridge to the 30S subunit in the 70S ribosome.

One of the primary rRNA binding proteins. Required for association of the 30S and 50S subunits to form the 70S ribosome, for tRNA binding and peptide bond formation. It has been suggested to have peptidyltransferase activity; this is somewhat controversial. Makes several contacts with the 16S rRNA in the 70S ribosome. The protein is Large ribosomal subunit protein uL2 of Brucella melitensis biotype 1 (strain ATCC 23456 / CCUG 17765 / NCTC 10094 / 16M).